Reading from the N-terminus, the 274-residue chain is Probable starch degradation products transport system permease protein AmyC (274 aa).

6 helical membrane-spanning segments follow: residues 11–31 (LTFL…IILV), 73–93 (LIIT…TAYA), 103–123 (VIIY…VMIP), 139–159 (LVFM…YGAL), 184–204 (IILP…IMWI), and 238–258 (WNLG…FYFL). Residues 69–259 (FSNTLIITVF…LPVVIFYFLA (191 aa)) enclose the ABC transmembrane type-1 domain.

Belongs to the binding-protein-dependent transport system permease family. MalFG subfamily.

It is found in the cell membrane. Functionally, probably part of a binding-protein-dependent transport system starch degradation products. Probably responsible for the translocation of the substrate across the membrane. The protein is Probable starch degradation products transport system permease protein AmyC (amyC) of Thermoanaerobacterium thermosulfurigenes (Clostridium thermosulfurogenes).